Consider the following 397-residue polypeptide: Galactokinase (397 aa).

Residues 1–27 are disordered; sequence MGEAVGEPSASGSGSCTGRSRRGCGRR. Positions 9-18 are enriched in low complexity; the sequence is SASGSGSCTG. 36–39 is a binding site for substrate; that stretch reads EHTD. Residues Ser-69 and 124-130 each bind ATP; that span reads GAGLSSS. Residues Ser-130 and Glu-161 each contribute to the Mg(2+) site. Catalysis depends on Asp-173, which acts as the Proton acceptor. Tyr-225 serves as a coordination point for substrate.

This sequence belongs to the GHMP kinase family. GalK subfamily.

The protein resides in the cytoplasm. The catalysed reaction is alpha-D-galactose + ATP = alpha-D-galactose 1-phosphate + ADP + H(+). It functions in the pathway carbohydrate metabolism; galactose metabolism. Its function is as follows. Catalyzes the transfer of the gamma-phosphate of ATP to D-galactose to form alpha-D-galactose-1-phosphate (Gal-1-P). The sequence is that of Galactokinase from Streptomyces lividans.